The primary structure comprises 92 residues: Transcription factor ILI6 (92 aa).

The interval 1-20 is disordered; the sequence is MSSRRSRSRQSGSSRITDEQ. The 55-residue stretch at 5–59 folds into the bHLH domain; it reads RSRSRQSGSSRITDEQISDLVSKLQDLLPEARLRSNDRVPSSRVLQETCNYIRSL.

It belongs to the bHLH protein family. In terms of assembly, interacts with APG.

It is found in the nucleus. Its function is as follows. Atypical and probable non DNA-binding bHLH transcription factor that acts as a positive regulator of grain size. Binds the transcription repressor APG and forms a heterodimer of antagonistic bHLH transcription factors that regulates grain length and weight by controlling cell elongation in lemma and palea. May be involved in the control of lamina inclination through brassinosteroid signaling pathway. This chain is Transcription factor ILI6 (ILI6), found in Oryza sativa subsp. indica (Rice).